Here is a 630-residue protein sequence, read N- to C-terminus: Lysophospholipase 3 (630 aa).

The first 16 residues, 1-16, serve as a signal peptide directing secretion; that stretch reads MKALLSLLTAVAVATA. The PLA2c domain occupies 39–587; the sequence is SCPATRPSIR…KEYCWNGTVD (549 aa). Asn-56, Asn-95, Asn-164, Asn-220, Asn-283, Asn-351, Asn-390, Asn-443, Asn-456, Asn-462, Asn-493, Asn-514, Asn-542, Asn-566, and Asn-583 each carry an N-linked (GlcNAc...) asparagine glycan. Residue Asn-606 is the site of GPI-like-anchor amidated asparagine attachment. The propeptide at 607–630 is removed in mature form; sequence AAYTQGVTWLVGILAVGVAMGMTA.

This sequence belongs to the lysophospholipase family. The GPI-like anchor contains a phosphoceramide lipid group.

The protein resides in the cell membrane. It catalyses the reaction a 1-acyl-sn-glycero-3-phosphocholine + H2O = sn-glycerol 3-phosphocholine + a fatty acid + H(+). Functionally, catalyzes the release of fatty acids from lysophospholipids. The protein is Lysophospholipase 3 (plb3) of Aspergillus fumigatus (strain CBS 144.89 / FGSC A1163 / CEA10) (Neosartorya fumigata).